The primary structure comprises 278 residues: MANYTAADVKKLRELTGAGMMDCKKALDEAEGNVEKAVEALRIKGQKGVAKREGRSAENGAVVSIIADDNSSGVLVELKCETDFVAKGEKFQNVATAIAEHVAKAAPADLDALLASEIEAGKTVQAFVDEANANLGEKIVLDRFAQFADGYVLAYMHRTMPDLPPQIGVLVELDKPNAEVAKGVAQHIAAFAPKYLSKEDVRPDVVESERRIAEETTRAEGKPEAAIAKIVEGRVNGFFKDATLLGQPYALDNKKSVQKVLDEAGVTLKRFTRIKVGI.

The tract at residues 82 to 85 is involved in Mg(2+) ion dislocation from EF-Tu; the sequence is TDFV.

This sequence belongs to the EF-Ts family.

Its subcellular location is the cytoplasm. Functionally, associates with the EF-Tu.GDP complex and induces the exchange of GDP to GTP. It remains bound to the aminoacyl-tRNA.EF-Tu.GTP complex up to the GTP hydrolysis stage on the ribosome. The polypeptide is Elongation factor Ts (tsf) (Streptomyces ramocissimus).